Here is a 251-residue protein sequence, read N- to C-terminus: Triosephosphate isomerase (251 aa).

10 to 12 (NWK) is a substrate binding site. Histidine 99 functions as the Electrophile in the catalytic mechanism. The active-site Proton acceptor is glutamate 167. Substrate is bound by residues glycine 173, serine 211, and 232–233 (GG).

This sequence belongs to the triosephosphate isomerase family. In terms of assembly, homodimer.

It localises to the cytoplasm. The enzyme catalyses D-glyceraldehyde 3-phosphate = dihydroxyacetone phosphate. It participates in carbohydrate biosynthesis; gluconeogenesis. It functions in the pathway carbohydrate degradation; glycolysis; D-glyceraldehyde 3-phosphate from glycerone phosphate: step 1/1. Involved in the gluconeogenesis. Catalyzes stereospecifically the conversion of dihydroxyacetone phosphate (DHAP) to D-glyceraldehyde-3-phosphate (G3P). The sequence is that of Triosephosphate isomerase from Neisseria meningitidis serogroup A / serotype 4A (strain DSM 15465 / Z2491).